The primary structure comprises 725 residues: Phosphatase and actin regulator 4A (725 aa).

Residues 1–12 show a composition bias toward polar residues; it reads MGQGASTQTLNP. The disordered stretch occupies residues 1–597; the sequence is MGQGASTQTL…SSTWNNKEQW (597 aa). Basic residues predominate over residues 55 to 64; sequence KPWKWRKKKT. Basic and acidic residues-rich tracts occupy residues 65–100, 124–147, and 155–164; these read SDKFKETSEGLVLERKMSVRKPREELIERGLLKDIP, GDRKSDSGSEIDQDRRMDDTGERK, and KRNDGTERMT. Residues 75–100 form an RPEL 1 repeat; that stretch reads LVLERKMSVRKPREELIERGLLKDIP. Positions 166–177 are enriched in polar residues; sequence MIQSFQKMSLMQ. The segment covering 212–221 has biased composition (low complexity); sequence VIAAPSSAEP. Over residues 222–235 the composition is skewed to pro residues; sequence APVPPPPIAKPPPR. Low complexity-rich tracts occupy residues 265-276 and 292-313; these read PAHTTPATVSTH and PAHVTTPAAPAHSNPPAVLLKQ. Residues 359-368 show a composition bias toward polar residues; the sequence is TPVTKRNSGD. Residues 374-384 show a composition bias toward pro residues; the sequence is PEPPPPAPTSV. A compositionally biased stretch (low complexity) spans 385-401; that stretch reads PIPAAAPISAPPSTQSD. Pro residues predominate over residues 402 to 417; the sequence is PPSPTTEPPSQPPPLP. Basic and acidic residues predominate over residues 497-510; the sequence is QKPELEPRSRRGLV. Acidic residues-rich tracts occupy residues 522 to 536 and 545 to 554; these read AGSESSEEEEDESDS and DNEEDDDEED. A compositionally biased stretch (basic and acidic residues) spans 567–585; it reads KDTLALKLERQQEKEKSQE. RPEL repeat units follow at residues 606 to 631 and 644 to 669; these read TALTRRLSQRPTAQELEQRNILLAKN and RRLTRKLSQRPTIADLQARKILRFHE.

Belongs to the phosphatase and actin regulator family. As to quaternary structure, binds ppp1ca and actin.

The protein resides in the cytoplasm. Its subcellular location is the cell projection. It is found in the lamellipodium. Functionally, regulator of protein phosphatase 1 (PP1) required for neural tube and optic fissure closure, and enteric neural crest cell (ENCCs) migration during development. Acts as an activator of PP1. During neural tube closure, localizes to the ventral neural tube and activates PP1, leading to down-regulate cell proliferation within cranial neural tissue and the neural retina. Also acts as a regulator of migration of enteric neural crest cells (ENCCs) by activating PP1, leading to repression of the integrin signaling through the rho/rock pathway. This is Phosphatase and actin regulator 4A (phactr4a) from Danio rerio (Zebrafish).